A 158-amino-acid polypeptide reads, in one-letter code: 2-C-methyl-D-erythritol 2,4-cyclodiphosphate synthase (158 aa).

A divalent metal cation is bound by residues aspartate 8 and histidine 10. 4-CDP-2-C-methyl-D-erythritol 2-phosphate is bound by residues aspartate 8–histidine 10 and histidine 34–serine 35. Histidine 42 is an a divalent metal cation binding site. 4-CDP-2-C-methyl-D-erythritol 2-phosphate-binding positions include aspartate 56–glycine 58, phenylalanine 61–aspartate 65, alanine 100–leucine 106, threonine 132–glutamate 135, and phenylalanine 139.

The protein belongs to the IspF family. As to quaternary structure, homotrimer. It depends on a divalent metal cation as a cofactor.

It carries out the reaction 4-CDP-2-C-methyl-D-erythritol 2-phosphate = 2-C-methyl-D-erythritol 2,4-cyclic diphosphate + CMP. It functions in the pathway isoprenoid biosynthesis; isopentenyl diphosphate biosynthesis via DXP pathway; isopentenyl diphosphate from 1-deoxy-D-xylulose 5-phosphate: step 4/6. Its function is as follows. Involved in the biosynthesis of isopentenyl diphosphate (IPP) and dimethylallyl diphosphate (DMAPP), two major building blocks of isoprenoid compounds. Catalyzes the conversion of 4-diphosphocytidyl-2-C-methyl-D-erythritol 2-phosphate (CDP-ME2P) to 2-C-methyl-D-erythritol 2,4-cyclodiphosphate (ME-CPP) with a corresponding release of cytidine 5-monophosphate (CMP). The chain is 2-C-methyl-D-erythritol 2,4-cyclodiphosphate synthase from Clostridium beijerinckii (strain ATCC 51743 / NCIMB 8052) (Clostridium acetobutylicum).